We begin with the raw amino-acid sequence, 322 residues long: Protein mono-ADP-ribosyltransferase PARP16 (322 aa).

The Cytoplasmic portion of the chain corresponds to 1–287; sequence MQLSNRAAAR…RASSQLSWLS (287 aa). In terms of domain architecture, PARP alpha-helical spans 5 to 91; that stretch reads NRAAAREAAS…AWDLVSWILS (87 aa). The PARP catalytic domain maps to 94–279; it reads ILTIHSAKKA…VYSQKQPKRA (186 aa). NAD(+)-binding residues include histidine 152, tyrosine 182, and tyrosine 254. Residues 288–308 traverse the membrane as a helical segment; sequence SHWFVIMMSLYLLLLLIVSVT. Over 309 to 322 the chain is Lumenal; sequence NSSVFHHFWNRVKR.

It belongs to the ARTD/PARP family. Interacts with KPNB1. Auto-mono-ADP-ribosylated.

Its subcellular location is the endoplasmic reticulum membrane. The catalysed reaction is L-aspartyl-[protein] + NAD(+) = 4-O-(ADP-D-ribosyl)-L-aspartyl-[protein] + nicotinamide. It carries out the reaction L-lysyl-[protein] + NAD(+) = N(6)-(ADP-D-ribosyl)-L-lysyl-[protein] + nicotinamide + H(+). It catalyses the reaction L-glutamyl-[protein] + NAD(+) = 5-O-(ADP-D-ribosyl)-L-glutamyl-[protein] + nicotinamide. With respect to regulation, in absence of activation signal, PARP16 is autoinhibited by the PARP alpha-helical domain (also named HD region), which prevents effective NAD(+)-binding. Activity is highly stimulated by signals, which unfold the PARP alpha-helical domain, relieving autoinhibition. Intracellular mono-ADP-ribosyltransferase that plays a role in different processes, such as protein translation and unfolded protein response (UPR), through the mono-ADP-ribosylation of proteins involved in those processes. Acts as an inhibitor of protein translation by catalyzing mono-ADP-ribosylation of ribosomal subunits, such as RPL14 and RPS6, thereby inhibiting polysome assembly and mRNA loading. Mono-ADP-ribosylation of ribosomal subunits is promoted by NMNAT2. Involved in the unfolded protein response (UPR) by ADP-ribosylating and activating EIF2AK3 and ERN1, two important UPR effectors. May also mediate mono-ADP-ribosylation of karyopherin KPNB1 a nuclear import factor. May not modify proteins on arginine or cysteine residues compared to other mono-ADP-ribosyltransferases. This Mus musculus (Mouse) protein is Protein mono-ADP-ribosyltransferase PARP16.